The following is a 171-amino-acid chain: Protein BTG1 (171 aa).

S159 is subject to Phosphoserine.

This sequence belongs to the BTG family. In terms of assembly, interacts with CNOT7 and CNOT8.

In terms of biological role, anti-proliferative protein. The sequence is that of Protein BTG1 (Btg1) from Rattus norvegicus (Rat).